The sequence spans 371 residues: 4-hydroxybenzoate polyprenyltransferase, mitochondrial (371 aa).

Residues 1-34 (MLGSRAAGFARGLRAVALAWLPGWRGRSFALARA) constitute a mitochondrion transit peptide. The Mitochondrial matrix portion of the chain corresponds to 35 to 83 (AGAPHGGDLQPPACPEPRGRQLSLSAAAVVDSAPRPLQPYLRLMRLDKP). A helical membrane pass occupies residues 84–104 (IGTWLLYLPCTWSIGLAAEPG). Over 105–108 (CFPD) the chain is Mitochondrial intermembrane. The chain crosses the membrane as a helical span at residues 109–129 (WYMLSLFGTGAILMRGAGCTI). Over 130 to 148 (NDMWDQDYDKKVTRTANRP) the chain is Mitochondrial matrix. The helical transmembrane segment at 149 to 169 (IAAGDISTFQSFVFLGGQLTL) threads the bilayer. Residues 170–172 (ALG) lie on the Mitochondrial intermembrane side of the membrane. The helical transmembrane segment at 173-193 (VLLCLNYYSIALGAGSLLLVI) threads the bilayer. Topologically, residues 194 to 203 (TYPLMKRISY) are mitochondrial matrix. The chain crosses the membrane as a helical span at residues 204–224 (WPQLALGLTFNWGALLGWSAI). Topologically, residues 225–231 (KGSCDPS) are mitochondrial intermembrane. Residues 232-252 (VCLPLYFSGVMWTLIYDTIYA) form a helical membrane-spanning segment. Topologically, residues 253-277 (HQDKRDDVLIGLKSTALRFGENTKP) are mitochondrial matrix. The chain crosses the membrane as a helical span at residues 278–298 (WLSGFSVAMLGALSLVGVNSG). The Mitochondrial intermembrane portion of the chain corresponds to 299-300 (QT). Residues 301–321 (APYYAALGAVGAHLTHQIYTL) form a helical membrane-spanning segment. The Mitochondrial matrix segment spans residues 322-332 (DIHRPEDCWNK). The chain crosses the membrane as a helical span at residues 333–353 (FISNRTLGLIVFLGIVLGNLW). The Mitochondrial intermembrane segment spans residues 354-371 (KEKKTDKTKKGIENKIEN).

This sequence belongs to the UbiA prenyltransferase family. The cofactor is Mg(2+). Widely expressed. Present in all of the tissues tested. Expressed at higher level in skeletal muscle, adrenal glands and the heart.

Its subcellular location is the mitochondrion inner membrane. It carries out the reaction an all-trans-polyprenyl diphosphate + 4-hydroxybenzoate = a 4-hydroxy-3-(all-trans-polyprenyl)benzoate + diphosphate. It catalyses the reaction all-trans-decaprenyl diphosphate + 4-hydroxybenzoate = 4-hydroxy-3-(all-trans-decaprenyl)benzoate + diphosphate. The catalysed reaction is all-trans-nonaprenyl diphosphate + 4-hydroxybenzoate = 4-hydroxy-3-(all-trans-nonaprenyl)benzoate + diphosphate. It participates in cofactor biosynthesis; ubiquinone biosynthesis. Functionally, mediates the second step in the final reaction sequence of coenzyme Q (CoQ) biosynthesis. Catalyzes the prenylation of para-hydroxybenzoate (PHB) with an all-trans polyprenyl donor (such as all-trans-decaprenyl diphosphate). The length of the polyprenyl side chain varies depending on the species, in humans, the side chain is comprised of 10 isoprenyls (decaprenyl) producing CoQ10 (also known as ubiquinone), whereas rodents predominantly generate CoQ9. However, this specificity is not complete, human tissues have low amounts of CoQ9 and rodent organs contain some CoQ10. Plays a central role in the biosynthesis of CoQ10. CoQ10 is a vital molecule that transports electrons from mitochondrial respiratory chain complexes. CoQs also function as cofactors for uncoupling protein and play a role as regulators of the extracellularly-induced ceramide-dependent apoptotic pathway. Regulates mitochondrial permeability transition pore (mPTP) opening and ROS production (pivotal events in cell death) in a tissue specific manner. The sequence is that of 4-hydroxybenzoate polyprenyltransferase, mitochondrial from Homo sapiens (Human).